A 104-amino-acid polypeptide reads, in one-letter code: L-rhamnose mutarotase (104 aa).

Residue Tyr-18 coordinates substrate. Residue His-22 is the Proton donor of the active site. Substrate-binding positions include Tyr-41 and 76–77 (WW).

Belongs to the rhamnose mutarotase family. As to quaternary structure, homodimer.

The protein localises to the cytoplasm. It carries out the reaction alpha-L-rhamnose = beta-L-rhamnose. It participates in carbohydrate metabolism; L-rhamnose metabolism. Involved in the anomeric conversion of L-rhamnose. The sequence is that of L-rhamnose mutarotase from Jannaschia sp. (strain CCS1).